Consider the following 356-residue polypeptide: DNA polymerase IV (356 aa).

The region spanning Ile-6–Gly-187 is the UmuC domain. Residues Asp-10 and Asp-105 each coordinate Mg(2+). Residue Glu-106 is part of the active site.

This sequence belongs to the DNA polymerase type-Y family. As to quaternary structure, monomer. It depends on Mg(2+) as a cofactor.

The protein localises to the cytoplasm. It catalyses the reaction DNA(n) + a 2'-deoxyribonucleoside 5'-triphosphate = DNA(n+1) + diphosphate. Poorly processive, error-prone DNA polymerase involved in untargeted mutagenesis. Copies undamaged DNA at stalled replication forks, which arise in vivo from mismatched or misaligned primer ends. These misaligned primers can be extended by PolIV. Exhibits no 3'-5' exonuclease (proofreading) activity. May be involved in translesional synthesis, in conjunction with the beta clamp from PolIII. The chain is DNA polymerase IV from Staphylococcus saprophyticus subsp. saprophyticus (strain ATCC 15305 / DSM 20229 / NCIMB 8711 / NCTC 7292 / S-41).